A 201-amino-acid chain; its full sequence is Small ribosomal subunit protein uS4c (201 aa).

Residues 20–43 (GLTSKRPRAGSDLRNQSRSGKRSQ) are disordered. The region spanning 89–149 (MRLDNILFRL…NEQKSRALIQ (61 aa)) is the S4 RNA-binding domain.

It belongs to the universal ribosomal protein uS4 family. As to quaternary structure, part of the 30S ribosomal subunit. Contacts protein S5. The interaction surface between S4 and S5 is involved in control of translational fidelity.

The protein localises to the plastid. The protein resides in the chloroplast. Functionally, one of the primary rRNA binding proteins, it binds directly to 16S rRNA where it nucleates assembly of the body of the 30S subunit. With S5 and S12 plays an important role in translational accuracy. This is Small ribosomal subunit protein uS4c (rps4) from Vitis vinifera (Grape).